We begin with the raw amino-acid sequence, 161 residues long: N5-carboxyaminoimidazole ribonucleotide mutase (161 aa).

The substrate site is built by Ser-9, Asp-12, and Arg-39.

It belongs to the AIR carboxylase family. Class I subfamily.

It catalyses the reaction 5-carboxyamino-1-(5-phospho-D-ribosyl)imidazole + H(+) = 5-amino-1-(5-phospho-D-ribosyl)imidazole-4-carboxylate. The protein operates within purine metabolism; IMP biosynthesis via de novo pathway; 5-amino-1-(5-phospho-D-ribosyl)imidazole-4-carboxylate from 5-amino-1-(5-phospho-D-ribosyl)imidazole (N5-CAIR route): step 2/2. Its function is as follows. Catalyzes the conversion of N5-carboxyaminoimidazole ribonucleotide (N5-CAIR) to 4-carboxy-5-aminoimidazole ribonucleotide (CAIR). The polypeptide is N5-carboxyaminoimidazole ribonucleotide mutase (Aliivibrio fischeri (strain ATCC 700601 / ES114) (Vibrio fischeri)).